The chain runs to 233 residues: MASEEAKFAARADRLAGRQGVAGFMPASARAAQPAPTNRYIMPQFVEKTPYGMKTQDAYSRLFEDRIIFLGVQVDDASADDVMAQLLVLESQDPNRDVMMYINSPGGSMTAMTAIYDTMQYIKPDVQTVCLGQAASAAAILLASGTKGKRLMLPNARVLIHQPAIDQGFGKATEIEIQAKEMLRMREWLEETLAKHTGQDVEKIRRDIEVDTFLTAPEAKEYGIVDEVLEHRQ.

Serine 136 acts as the Nucleophile in catalysis. Histidine 161 is an active-site residue.

This sequence belongs to the peptidase S14 family. In terms of assembly, fourteen ClpP subunits assemble into 2 heptameric rings which stack back to back to give a disk-like structure with a central cavity, resembling the structure of eukaryotic proteasomes.

The protein resides in the cytoplasm. It catalyses the reaction Hydrolysis of proteins to small peptides in the presence of ATP and magnesium. alpha-casein is the usual test substrate. In the absence of ATP, only oligopeptides shorter than five residues are hydrolyzed (such as succinyl-Leu-Tyr-|-NHMec, and Leu-Tyr-Leu-|-Tyr-Trp, in which cleavage of the -Tyr-|-Leu- and -Tyr-|-Trp bonds also occurs).. Its function is as follows. Cleaves peptides in various proteins in a process that requires ATP hydrolysis. Has a chymotrypsin-like activity. Plays a major role in the degradation of misfolded proteins. This chain is ATP-dependent Clp protease proteolytic subunit 1, found in Bifidobacterium longum (strain NCC 2705).